Reading from the N-terminus, the 545-residue chain is MGVLKFKHIFFGSAVELSGVFQIVFIFLLIPCCLTANFRAPPVIPNVPFLWAWNAPTEFCLGKSGEPLDMSLFSLFGSPRKNKTGQGITIFYVDRLGYYPYIDPHTGAIVHGRIPQLGPLQQHLTKLRQEILYYMPKDNVGLAVIDWEEWLPTWLRNWKPKDIYRIKSIELVKSQHPQYNHSYATEKAKRDFEKAGKDFMEETLKLGRLLRPNHLWGYYLFPDCYNHHYDKPNLYKGSCFDIEKKRNDDLSWLWKESTALFPSVYLTSRARSATALSKLYVVRNRVHEAIRVSKIPDDKSPLPNFVYTRLVFTDQIFQFLSHHDLVYTIGEIVALGASGIVVWGSQSLARSMKSCLHLDNYMKTILNPYLINVTLAAKMCNQVLCQEQGVCTRKNWNPNDYLHLNPGNFAIQLGSNGTYKVDGKPTLTDLEQFSKNFQCSCYTNLNCKERTDMNNVRTVNVCAVENVCIDTNVGPQAVTYAPKEKKDVAHILSNTTSINSSTTMSLPFPRKHVSGCLLVLCMYSQYLNICYRLVAIGIQHGYYLK.

The signal sequence occupies residues 1–35; that stretch reads MGVLKFKHIFFGSAVELSGVFQIVFIFLLIPCCLT. Cystine bridges form between Cys60–Cys355 and Cys224–Cys239. Asn82 is a glycosylation site (N-linked (GlcNAc...) asparagine). Glu148 functions as the Proton donor in the catalytic mechanism. A glycan (N-linked (GlcNAc...) asparagine) is linked at Asn180. Asn372 is a glycosylation site (N-linked (GlcNAc...) asparagine). Intrachain disulfides connect Cys380/Cys391, Cys385/Cys439, and Cys441/Cys468.

Belongs to the glycosyl hydrolase 56 family. Testis.

The protein resides in the cell membrane. The enzyme catalyses Random hydrolysis of (1-&gt;4)-linkages between N-acetyl-beta-D-glucosamine and D-glucuronate residues in hyaluronate.. Its function is as follows. Involved in sperm-egg adhesion. Upon fertilization sperm must first penetrate a layer of cumulus cells that surrounds the egg before reaching the zona pellucida. The cumulus cells are embedded in a matrix containing hyaluronic acid which is formed prior to ovulation. This protein aids in penetrating the layer of cumulus cells by digesting hyaluronic acid. The polypeptide is Hyaluronidase PH-20 (SPAM1) (Oryctolagus cuniculus (Rabbit)).